The following is a 193-amino-acid chain: Putative RING finger protein ORF38 (193 aa).

An RING-type zinc finger spans residues 12–50 (CCICLDDEDVDRDNTIPCRHTVCRTCYVKPMLDQCPVCR).

The sequence is that of Putative RING finger protein ORF38 from Magallana gigas (Pacific oyster).